Here is a 570-residue protein sequence, read N- to C-terminus: Peptidyl-prolyl cis-trans isomerase FKBP9 (570 aa).

The N-terminal stretch at 1–24 (MALGARGWRRRSLLLLLLWVTGQA) is a signal peptide. 4 consecutive PPIase FKBP-type domains span residues 54–142 (GDFV…VDIW), 166–254 (SDFV…LDLH), 278–365 (GDFL…IDFH), and 389–477 (GDYL…LELV). Asn174, Asn286, Asn302, and Asn397 each carry an N-linked (GlcNAc...) asparagine glycan. 2 EF-hand domains span residues 488–523 (WNGEVSPNLFEEIDRDGNGEVLLEEFSEYIHAQVAT) and 533–568 (NAEMIVKNMFTNQDRNGDGKVTAEEFKLKDQEAKHD). Ca(2+)-binding residues include Asp501, Asp503, Asn505, Glu507, Glu512, Asp546, Asn548, Asp550, Lys552, and Glu557. Positions 567-570 (HDEL) match the Prevents secretion from ER motif.

Phosphorylated. As to expression, predominantly expressed in heart, skeletal muscle, lung, liver and kidney. Lower levels found in brain, spleen and testis.

It is found in the endoplasmic reticulum lumen. It catalyses the reaction [protein]-peptidylproline (omega=180) = [protein]-peptidylproline (omega=0). Inhibited by FK506. PPIases accelerate the folding of proteins during protein synthesis. This Mus musculus (Mouse) protein is Peptidyl-prolyl cis-trans isomerase FKBP9 (Fkbp9).